The primary structure comprises 180 residues: Large ribosomal subunit protein uL5 (180 aa).

This sequence belongs to the universal ribosomal protein uL5 family. As to quaternary structure, part of the 50S ribosomal subunit; part of the 5S rRNA/L5/L18/L25 subcomplex. Contacts the 5S rRNA and the P site tRNA. Forms a bridge to the 30S subunit in the 70S ribosome.

Its function is as follows. This is one of the proteins that bind and probably mediate the attachment of the 5S RNA into the large ribosomal subunit, where it forms part of the central protuberance. In the 70S ribosome it contacts protein S13 of the 30S subunit (bridge B1b), connecting the 2 subunits; this bridge is implicated in subunit movement. Contacts the P site tRNA; the 5S rRNA and some of its associated proteins might help stabilize positioning of ribosome-bound tRNAs. This Streptococcus equi subsp. equi (strain 4047) protein is Large ribosomal subunit protein uL5.